The primary structure comprises 370 residues: Glutamate 5-kinase (370 aa).

Position 11 (lysine 11) interacts with ATP. 3 residues coordinate substrate: serine 52, aspartate 139, and asparagine 151. Residues threonine 171–aspartate 172 and threonine 213–lysine 219 each bind ATP. The 79-residue stretch at threonine 278–glutamate 356 folds into the PUA domain.

The protein belongs to the glutamate 5-kinase family.

The protein localises to the cytoplasm. The enzyme catalyses L-glutamate + ATP = L-glutamyl 5-phosphate + ADP. Its pathway is amino-acid biosynthesis; L-proline biosynthesis; L-glutamate 5-semialdehyde from L-glutamate: step 1/2. Its function is as follows. Catalyzes the transfer of a phosphate group to glutamate to form L-glutamate 5-phosphate. The protein is Glutamate 5-kinase of Synechococcus sp. (strain ATCC 27144 / PCC 6301 / SAUG 1402/1) (Anacystis nidulans).